The primary structure comprises 155 residues: Ribonuclease H (155 aa).

The region spanning 5-146 (DQKPVIIHTD…ADQLARDGLT (142 aa)) is the RNase H type-1 domain. Positions 14, 52, 74, and 138 each coordinate Mg(2+). Residues 133–155 (ENERADQLARDGLTENRMKSRVK) are disordered.

Belongs to the RNase H family. In terms of assembly, monomer. Mg(2+) serves as cofactor.

Its subcellular location is the cytoplasm. It catalyses the reaction Endonucleolytic cleavage to 5'-phosphomonoester.. In terms of biological role, endonuclease that specifically degrades the RNA of RNA-DNA hybrids. The polypeptide is Ribonuclease H (Rhodopseudomonas palustris (strain ATCC BAA-98 / CGA009)).